The sequence spans 136 residues: Transcription antitermination protein NusB (136 aa).

The protein belongs to the NusB family.

Involved in transcription antitermination. Required for transcription of ribosomal RNA (rRNA) genes. Binds specifically to the boxA antiterminator sequence of the ribosomal RNA (rrn) operons. In Pseudarthrobacter chlorophenolicus (strain ATCC 700700 / DSM 12829 / CIP 107037 / JCM 12360 / KCTC 9906 / NCIMB 13794 / A6) (Arthrobacter chlorophenolicus), this protein is Transcription antitermination protein NusB.